The primary structure comprises 429 residues: Gap junction gamma-2 protein (429 aa).

Residues 1-25 (MTNMSWSFLTRLLEEIHNHSTFVGK) are Cytoplasmic-facing. The chain crosses the membrane as a helical span at residues 26-46 (VWLTVLVVFRIVLTAVGGESI). Residues 47 to 78 (YSDEQTKFTCNTRQPGCDNVCYDAFAPLSHVR) are Extracellular-facing. Residues 79–99 (FWVFQIVVISTPSVMYLGYAV) traverse the membrane as a helical segment. Residues 100 to 214 (HRLARASQDE…EGLMRVYVAQ (115 aa)) are Cytoplasmic-facing. Residues 106 to 200 (SQDERRRASR…GPAGQHDGRR (95 aa)) are disordered. The span at 112-123 (RASRRRPSRRAP) shows a compositional bias: basic residues. Residues 124 to 138 (RPPLPLPPPPHPGWP) show a composition bias toward pro residues. Over residues 142–173 (DLGEEEPMLGLGEEDEDPGVAEGLGEDEEAED) the composition is skewed to acidic residues. The helical transmembrane segment at 215–235 (LVARAAFEVAFLVGQYLLYGF) threads the bilayer. Topologically, residues 236-263 (EVRPFFACSRQPCPHVVDCFVSRPTEKT) are extracellular. A helical membrane pass occupies residues 264-284 (VFLLVMYVVSCLCLLLNLCEM). At 285–429 (AHLGLGNAQD…SREGKTTVWI (145 aa)) the chain is on the cytoplasmic side. Disordered regions lie at residues 296-316 (VRGR…PPCA) and 361-429 (LGDL…TVWI). Pro residues predominate over residues 303–316 (PASPGPMPRPPPCA). Phosphoserine is present on serine 366. Residues 372 to 395 (LPANARGPPKPGAPASGSGSATSG) show a composition bias toward low complexity.

It belongs to the connexin family. Gamma-type subfamily. In terms of assembly, a connexon is composed of a hexamer of connexins. Interacts with TJP1.

The protein localises to the cell membrane. The protein resides in the cell junction. It is found in the gap junction. Functionally, one gap junction consists of a cluster of closely packed pairs of transmembrane channels, the connexons, through which materials of low MW diffuse from one cell to a neighboring cell. May play a role in myelination in central and peripheral nervous systems. The sequence is that of Gap junction gamma-2 protein (GJC2) from Bos taurus (Bovine).